An 85-amino-acid polypeptide reads, in one-letter code: MAHKKAGGSTRNGRDSNAQRLGVKRFGGESVLAGNIIVRQRGTKFHAGTNVGCGKDHTLFALTDGKVQFEVKGPKNRKFISIVAE.

Residues 1-21 (MAHKKAGGSTRNGRDSNAQRL) form a disordered region. The span at 9–19 (STRNGRDSNAQ) shows a compositional bias: polar residues.

This sequence belongs to the bacterial ribosomal protein bL27 family.

The protein is Large ribosomal subunit protein bL27 of Pectobacterium atrosepticum (strain SCRI 1043 / ATCC BAA-672) (Erwinia carotovora subsp. atroseptica).